The primary structure comprises 88 residues: Elongation factor 1-beta (88 aa).

It belongs to the EF-1-beta/EF-1-delta family.

Promotes the exchange of GDP for GTP in EF-1-alpha/GDP, thus allowing the regeneration of EF-1-alpha/GTP that could then be used to form the ternary complex EF-1-alpha/GTP/AAtRNA. This chain is Elongation factor 1-beta, found in Halobacterium salinarum (strain ATCC 29341 / DSM 671 / R1).